The sequence spans 221 residues: Phosphoglycolate phosphatase (221 aa).

Residue D7 is the Nucleophile of the active site. The Mg(2+) site is built by D7 and D9. Position 148 (K148) interacts with substrate. 2 residues coordinate Mg(2+): D171 and D175.

It belongs to the archaeal SPP-like hydrolase family. Mg(2+) is required as a cofactor.

The catalysed reaction is 2-phosphoglycolate + H2O = glycolate + phosphate. Catalyzes the dephosphorylation of 2-phosphoglycolate. The sequence is that of Phosphoglycolate phosphatase from Methanothermobacter thermautotrophicus (strain ATCC 29096 / DSM 1053 / JCM 10044 / NBRC 100330 / Delta H) (Methanobacterium thermoautotrophicum).